A 148-amino-acid polypeptide reads, in one-letter code: Large ribosomal subunit protein bL9 (148 aa).

It belongs to the bacterial ribosomal protein bL9 family.

Functionally, binds to the 23S rRNA. This is Large ribosomal subunit protein bL9 from Geobacter metallireducens (strain ATCC 53774 / DSM 7210 / GS-15).